The chain runs to 617 residues: E3 ubiquitin-protein ligase ORTHRUS 1 (617 aa).

A PHD-type zinc finger spans residues 12 to 62 (DGVCMRCQVNPPSEETLTCGTCVTPWHVPCLLPESLASSTGEWECPDCSGV). Residues 129–169 (CSICIQLPERPITTPCGHNFCLKCFEKWAVGQGKLTCMICR) form an RING-type 1 zinc finger. Residues 258 to 407 (TRKQGVLVGE…FKVCRYLFVR (150 aa)) form the YDG domain. An RING-type 2 zinc finger spans residues 495 to 552 (CQICREVLSLPVTTPCAHNFCKACLEAKFAGITQLRERSNGGRKLRAKKNIMTCPCCT). Residues 563 to 593 (QVNREMMEIIENFKKSEEEADASISEEEEEE) are a coiled coil. A disordered region spans residues 575-617 (FKKSEEEADASISEEEEEESEPPTKKIKMDNNSVGGSGTSLSA). Positions 580–595 (EEADASISEEEEEESE) are enriched in acidic residues. The span at 604–617 (DNNSVGGSGTSLSA) shows a compositional bias: polar residues.

Expressed in inflorescences and leaves.

Its subcellular location is the nucleus. It carries out the reaction S-ubiquitinyl-[E2 ubiquitin-conjugating enzyme]-L-cysteine + [acceptor protein]-L-lysine = [E2 ubiquitin-conjugating enzyme]-L-cysteine + N(6)-ubiquitinyl-[acceptor protein]-L-lysine.. The protein operates within protein modification; protein ubiquitination. Functionally, E3 ubiquitin-protein ligase. Participates in CpG methylation-dependent transcriptional regulation and epigenetic transcriptional silencing. Mediates ubiquitination with the E2 ubiquitin-conjugating enzymes UBC11, UBC8 and UBC8 homologs (e.g. UBC10, UBC11, UBC28 and UBC29) but not with UBC27, UBC30, UBC32, UBC34 and UBC36. Promotes methylation-mediated gene silencing leading, for example, to early flowering. Can bind to CpG, CpNpG, and CpNpN DNA motifs, with a strong preference for methylated forms, and with highest affinity for CpG substrate. The protein is E3 ubiquitin-protein ligase ORTHRUS 1 (ORTH1) of Arabidopsis thaliana (Mouse-ear cress).